The sequence spans 167 residues: Glucose-6-phosphate isomerase (167 aa).

Glu54 (proton donor) is an active-site residue. His85 is a catalytic residue.

Belongs to the GPI family.

It localises to the cytoplasm. The catalysed reaction is alpha-D-glucose 6-phosphate = beta-D-fructose 6-phosphate. Its pathway is carbohydrate biosynthesis; gluconeogenesis. It functions in the pathway carbohydrate degradation; glycolysis; D-glyceraldehyde 3-phosphate and glycerone phosphate from D-glucose: step 2/4. Its function is as follows. Catalyzes the reversible isomerization of glucose-6-phosphate to fructose-6-phosphate. The sequence is that of Glucose-6-phosphate isomerase from Klebsiella oxytoca.